We begin with the raw amino-acid sequence, 347 residues long: NADH-ubiquinone oxidoreductase chain 2 (347 aa).

11 consecutive transmembrane segments (helical) span residues 1–21, 25–45, 68–88, 96–116, 122–142, 145–165, 178–198, 201–221, 239–259, 274–294, and 326–346; these read MNPMIFTSLLATIMLGTSIVL, HWFLTWLGFEMNMMAIIPVLM, MILVLAIIINLMYSGQWTIMI, MLITIALVMKLGLAPFHFWVP, VSLSSGLILLTWQKIAPLSLL, IFPSINTNLLLIMSLLSIMIG, IMAYSSIAHMGWMIAIMIYNP, SLLNLLIYIMMTSSMFMLLII, IVVSTMMVILLSLGGLPPLTG, SSVMLPSLMAILALLNLFFYM, and MMSLISMSMLALPLAPSLITL.

This sequence belongs to the complex I subunit 2 family. In terms of assembly, core subunit of respiratory chain NADH dehydrogenase (Complex I) which is composed of 45 different subunits. Interacts with TMEM242.

It localises to the mitochondrion inner membrane. The enzyme catalyses a ubiquinone + NADH + 5 H(+)(in) = a ubiquinol + NAD(+) + 4 H(+)(out). In terms of biological role, core subunit of the mitochondrial membrane respiratory chain NADH dehydrogenase (Complex I) which catalyzes electron transfer from NADH through the respiratory chain, using ubiquinone as an electron acceptor. Essential for the catalytic activity and assembly of complex I. In Sylvisorex lunaris (Moon forest shrew), this protein is NADH-ubiquinone oxidoreductase chain 2.